A 146-amino-acid chain; its full sequence is MDNEMTLTFLALSENEALARVAVTGFIAQLDPTIDELSEFKTVVSEAVSNAIIHGYEEDGKGVVTVHAKREDDVVTVSVMHKGIGIEDVSQAMEPLFTTKSVMERSGMGFTIMDSFSDQLTVMSKWREGTTVTFTKKFYTVRTAVM.

Belongs to the anti-sigma-factor family.

It carries out the reaction L-seryl-[protein] + ATP = O-phospho-L-seryl-[protein] + ADP + H(+). The enzyme catalyses L-threonyl-[protein] + ATP = O-phospho-L-threonyl-[protein] + ADP + H(+). Functionally, binds to sigma F and blocks its ability to form an RNA polymerase holoenzyme (E-sigma F). Phosphorylates SpoIIAA on a serine residue. This phosphorylation may enable SpoIIAA to act as an anti-anti-sigma factor that counteracts SpoIIAB and thus releases sigma F from inhibition. This chain is Anti-sigma F factor, found in Lysinibacillus sphaericus (Bacillus sphaericus).